Here is a 243-residue protein sequence, read N- to C-terminus: 2-C-methyl-D-erythritol 4-phosphate cytidylyltransferase (243 aa).

Belongs to the IspD/TarI cytidylyltransferase family. IspD subfamily.

It catalyses the reaction 2-C-methyl-D-erythritol 4-phosphate + CTP + H(+) = 4-CDP-2-C-methyl-D-erythritol + diphosphate. Its pathway is isoprenoid biosynthesis; isopentenyl diphosphate biosynthesis via DXP pathway; isopentenyl diphosphate from 1-deoxy-D-xylulose 5-phosphate: step 2/6. In terms of biological role, catalyzes the formation of 4-diphosphocytidyl-2-C-methyl-D-erythritol from CTP and 2-C-methyl-D-erythritol 4-phosphate (MEP). The polypeptide is 2-C-methyl-D-erythritol 4-phosphate cytidylyltransferase (Rhodopirellula baltica (strain DSM 10527 / NCIMB 13988 / SH1)).